An 82-amino-acid chain; its full sequence is DinI-like protein (82 aa).

It belongs to the DinI family.

The protein is DinI-like protein of Enterobacteria phage VT1-Sakai.